The sequence spans 329 residues: Beta-tectorin (329 aa).

The signal sequence occupies residues 1–17 (MVAVTVYLMVILAQAFA). The ZP domain occupies 19-287 (PCTPNKADVI…VTCDKRKQRM (269 aa)). N-linked (GlcNAc...) asparagine glycans are attached at residues asparagine 80, asparagine 104, asparagine 116, and asparagine 145. Cysteine 204 and cysteine 264 form a disulfide bridge. Residue glycine 304 is the site of GPI-anchor amidated glycine attachment. Residues 305–329 (LSRFYMLSDVIFHLLFAIGFCAILL) constitute a propeptide, removed in mature form.

May form homomeric filament after self-association or heteromeric filament after association with alpha-tectorin. In terms of processing, the N-terminus is blocked. N-glycosylated. Post-translationally, the presence of a hydrophobic C-terminus preceded by a potential cleavage site strongly suggests that tectorins are synthesized as glycosylphosphatidylinositol-linked, membrane-bound precursors. Tectorins are targeted to the apical surface of the inner ear epithelia by the lipid and proteolytically released into the extracellular compartment. As to expression, exclusively expressed in the inner ear, where it is found in basilar papilla, clear cells, supporting cells, cuboidal cells and the lagena macula.

The protein localises to the cell membrane. It is found in the secreted. It localises to the extracellular space. Its subcellular location is the extracellular matrix. Its function is as follows. One of the major non-collagenous components of the tectorial membrane. The tectorial membrane is an extracellular matrix of the inner ear that covers the neuroepithelium of the cochlea and contacts the stereocilia bundles of specialized sensory hair cells. Sound induces movement of these hair cells relative to the tectorial membrane, deflects the stereocilia and leads to fluctuations in hair-cell membrane potential, transducing sound into electrical signals. The sequence is that of Beta-tectorin (TECTB) from Gallus gallus (Chicken).